Here is a 59-residue protein sequence, read N- to C-terminus: Large ribosomal subunit protein bL32c (59 aa).

Residues 37 to 59 (SRSFSSGNEHPKPKGFSGQQANK) form a disordered region.

The protein belongs to the bacterial ribosomal protein bL32 family.

Its subcellular location is the plastid. It is found in the chloroplast. This Saccharum hybrid (Sugarcane) protein is Large ribosomal subunit protein bL32c.